Here is a 411-residue protein sequence, read N- to C-terminus: LL-diaminopimelate aminotransferase (411 aa).

Substrate contacts are provided by Tyr15 and Gly42. Pyridoxal 5'-phosphate-binding positions include Tyr72, 108–109, Tyr132, Asn188, Tyr219, and 247–249; these read AK and SFS. Substrate-binding residues include Lys109, Tyr132, and Asn188. Lys250 bears the N6-(pyridoxal phosphate)lysine mark. Pyridoxal 5'-phosphate-binding residues include Arg258 and Asn293. Substrate is bound by residues Asn293 and Arg389.

Belongs to the class-I pyridoxal-phosphate-dependent aminotransferase family. LL-diaminopimelate aminotransferase subfamily. Homodimer. The cofactor is pyridoxal 5'-phosphate.

The catalysed reaction is (2S,6S)-2,6-diaminopimelate + 2-oxoglutarate = (S)-2,3,4,5-tetrahydrodipicolinate + L-glutamate + H2O + H(+). It participates in amino-acid biosynthesis; L-lysine biosynthesis via DAP pathway; LL-2,6-diaminopimelate from (S)-tetrahydrodipicolinate (aminotransferase route): step 1/1. In terms of biological role, involved in the synthesis of meso-diaminopimelate (m-DAP or DL-DAP), required for both lysine and peptidoglycan biosynthesis. Catalyzes the direct conversion of tetrahydrodipicolinate to LL-diaminopimelate. This is LL-diaminopimelate aminotransferase from Desulfitobacterium hafniense (strain Y51).